The sequence spans 257 residues: Zinc import ATP-binding protein ZnuC (257 aa).

Residues 6 to 221 (IRLEQVGVSF…PAFVELFGQN (216 aa)) form the ABC transporter domain. 38 to 45 (GPNGAGKT) provides a ligand contact to ATP.

Belongs to the ABC transporter superfamily. Zinc importer (TC 3.A.1.15.5) family. The complex is composed of two ATP-binding proteins (ZnuC), two transmembrane proteins (ZnuB) and a solute-binding protein (ZnuA).

The protein resides in the cell inner membrane. The enzyme catalyses Zn(2+)(out) + ATP(in) + H2O(in) = Zn(2+)(in) + ADP(in) + phosphate(in) + H(+)(in). Functionally, part of the ABC transporter complex ZnuABC involved in zinc import. Responsible for energy coupling to the transport system. The chain is Zinc import ATP-binding protein ZnuC from Pseudomonas entomophila (strain L48).